The sequence spans 887 residues: Microsomal triglyceride transfer protein large subunit (887 aa).

An N-terminal signal peptide occupies residues 1 to 11 (FLCFISSYSAS). Residues 21 to 655 (LNNDRLYKLT…YIEKTPLHGI (635 aa)) form the Vitellogenin domain. The cysteines at positions 167 and 187 are disulfide-linked.

Heterodimer; heterodimerizes with the protein disulfide isomerase (P4HB/PDI). Interacts with APOB. Interacts with PRAP1.

Its subcellular location is the endoplasmic reticulum. The protein localises to the golgi apparatus. The enzyme catalyses a 1,2-diacyl-sn-glycero-3-phosphocholine(in) = a 1,2-diacyl-sn-glycero-3-phosphocholine(out). The catalysed reaction is a 1,2-diacyl-sn-glycero-3-phosphoethanolamine(in) = a 1,2-diacyl-sn-glycero-3-phosphoethanolamine(out). It carries out the reaction a cholesterol ester(in) = a cholesterol ester(out). It catalyses the reaction a triacyl-sn-glycerol(in) = a triacyl-sn-glycerol(out). Its function is as follows. Catalyzes the transport of triglyceride, cholesteryl ester, and phospholipid between phospholipid surfaces. Required for the assembly and secretion of plasma lipoproteins that contain apolipoprotein B. May be involved in regulating cholesteryl ester biosynthesis in cells that produce lipoproteins. The protein is Microsomal triglyceride transfer protein large subunit (MTTP) of Bos taurus (Bovine).